The following is a 409-amino-acid chain: Peptidase T (409 aa).

His-78 contacts Zn(2+). Asp-80 is an active-site residue. Asp-140 is a binding site for Zn(2+). The Proton acceptor role is filled by Glu-173. Residues Glu-174, Asp-196, and His-379 each contribute to the Zn(2+) site.

This sequence belongs to the peptidase M20B family. Zn(2+) is required as a cofactor.

The protein localises to the cytoplasm. It carries out the reaction Release of the N-terminal residue from a tripeptide.. Cleaves the N-terminal amino acid of tripeptides. The protein is Peptidase T of Salmonella agona (strain SL483).